Consider the following 669-residue polypeptide: Zinc finger MYM-type protein 5 (669 aa).

Glycyl lysine isopeptide (Lys-Gly) (interchain with G-Cter in SUMO2) cross-links involve residues Lys-88, Lys-91, Lys-134, Lys-149, Lys-166, and Lys-225. 4 MYM-type zinc fingers span residues His-265–Asn-299, Gln-311–Val-351, His-358–Gly-393, and Lys-404–Asn-431. Glycyl lysine isopeptide (Lys-Gly) (interchain with G-Cter in SUMO2) cross-links involve residues Lys-443, Lys-455, Lys-462, and Lys-552.

In terms of assembly, interacts (via N-terminal 120 amino acid region) with ETV5 (via C-terminal).

Its subcellular location is the nucleus. Functions as a transcriptional regulator. The sequence is that of Zinc finger MYM-type protein 5 (ZMYM5) from Homo sapiens (Human).